The chain runs to 163 residues: Nucleotide-binding protein Tery_2743 (163 aa).

The protein belongs to the YajQ family.

Its function is as follows. Nucleotide-binding protein. The sequence is that of Nucleotide-binding protein Tery_2743 from Trichodesmium erythraeum (strain IMS101).